The following is a 911-amino-acid chain: DNA ligase 4 (911 aa).

Positions 271, 272, 273, 274, 278, 331, 345, 367, 427, 432, 449, and 451 each coordinate ATP. The active-site N6-AMP-lysine intermediate is K273. Residue E331 coordinates Mg(2+). E427 serves as a coordination point for Mg(2+). Positions 610-620 (LASKHLYIGGD) are required for catalytic activity. BRCT domains follow at residues 654-743 (KISN…PRFM) and 808-911 (SPLS…QYLI).

It belongs to the ATP-dependent DNA ligase family. In terms of assembly, interacts with XRCC4; the LIG4-XRCC4 subcomplex has a 1:2 stoichiometry and XRCC4 is required for LIG4 stability. Component of the core long-range non-homologous end joining (NHEJ) complex (also named DNA-PK complex) composed of PRKDC, LIG4, XRCC4, XRCC6/Ku70, XRCC5/Ku86 and NHEJ1/XLF. Additional component of the NHEJ complex includes PAXX. Following autophosphorylation, PRKDC dissociates from DNA, leading to formation of the short-range NHEJ complex, composed of LIG4, XRCC4, XRCC6/Ku70, XRCC5/Ku86 and NHEJ1/XLF. Interacts with DCLRE1C; the interaction is direct. Interacts with APLF. Requires Mg(2+) as cofactor. Testis, thymus, prostate and heart.

Its subcellular location is the nucleus. The catalysed reaction is ATP + (deoxyribonucleotide)n-3'-hydroxyl + 5'-phospho-(deoxyribonucleotide)m = (deoxyribonucleotide)n+m + AMP + diphosphate.. Its function is as follows. DNA ligase involved in DNA non-homologous end joining (NHEJ); required for double-strand break (DSB) repair and V(D)J recombination. Catalyzes the NHEJ ligation step of the broken DNA during DSB repair by resealing the DNA breaks after the gap filling is completed. Joins single-strand breaks in a double-stranded polydeoxynucleotide in an ATP-dependent reaction. LIG4 is mechanistically flexible: it can ligate nicks as well as compatible DNA overhangs alone, while in the presence of XRCC4, it can ligate ends with 2-nucleotides (nt) microhomology and 1-nt gaps. Forms a subcomplex with XRCC4; the LIG4-XRCC4 subcomplex is responsible for the NHEJ ligation step and XRCC4 enhances the joining activity of LIG4. Binding of the LIG4-XRCC4 complex to DNA ends is dependent on the assembly of the DNA-dependent protein kinase complex DNA-PK to these DNA ends. LIG4 regulates nuclear localization of XRCC4. The polypeptide is DNA ligase 4 (Homo sapiens (Human)).